Consider the following 72-residue polypeptide: uncharacterized protein (72 aa).

The helical transmembrane segment at 33-53 threads the bilayer; it reads VCIFFSLIFFFFFFFFCVNWG.

Its subcellular location is the membrane. This is an uncharacterized protein from Dictyostelium discoideum (Social amoeba).